The sequence spans 257 residues: UPF0246 protein YaaA (257 aa).

The protein belongs to the UPF0246 family.

This Salmonella agona (strain SL483) protein is UPF0246 protein YaaA.